The following is a 108-amino-acid chain: UPF0060 membrane protein Msil_1658 (108 aa).

Transmembrane regions (helical) follow at residues 5 to 25, 31 to 51, 62 to 82, and 88 to 108; these read LVYVAAALAEIAGCFSFWAWL, SLWLIPGTASLLLFAWLLTLI, AYGGVYVTVSLLWLWAMEGVW, and LGGATLCLIGAAIIILAPRPA.

The protein belongs to the UPF0060 family.

Its subcellular location is the cell inner membrane. This Methylocella silvestris (strain DSM 15510 / CIP 108128 / LMG 27833 / NCIMB 13906 / BL2) protein is UPF0060 membrane protein Msil_1658.